We begin with the raw amino-acid sequence, 122 residues long: Crustacean hyperglycemic hormones 5 (122 aa).

An N-terminal signal peptide occupies residues 1 to 26 (MSLGLIASRLVAVALVVVVACSTTWA). 3 cysteine pairs are disulfide-bonded: Cys-55–Cys-91, Cys-71–Cys-87, and Cys-74–Cys-100. Residue Val-120 is modified to Valine amide.

This sequence belongs to the arthropod CHH/MIH/GIH/VIH hormone family.

It is found in the secreted. Functionally, hormone found in the sinus gland of isopods and decapods which controls the blood sugar level. Has a secretagogue action over the amylase released from the midgut gland. May act as a stress hormone and may be involved in the control of molting and reproduction. The sequence is that of Crustacean hyperglycemic hormones 5 (CHH5) from Penaeus monodon (Giant tiger prawn).